The sequence spans 377 residues: MKFVDEATIEVIAGKGGNGVASFRREKFIPKGGPDGGDGGRGGSIYAVADRNINTLIDFRYARLHRAKNGENGRGSDQYGAAAPDITLRVPVGTVVHDADTGEVLFDLDRHDQKVTLAAGGAGGMGNIHFKSSTNRAPRQWTPGKEGEQRRLRMELKVLADVGLLGLPNAGKSTLISRISNARPKIADYPFTTLHPNLGVVRTSPSRSFVVADIPGLIEGASEGAGLGHLFLRHLARTRVLLHLVDISSPDPEADPIEQAVVDANAIVEELRRYDPELAAKPRWLVLNKLDMVPDAQDAQQRFCAEFGWTGPVFAISGLNGEGTQDLIWALQDYLDAEKRKDQDAQDQADGTYVFEDPRFDASRGGAAPATPPGGDE.

The Obg domain maps to 1 to 159; it reads MKFVDEATIE…RRLRMELKVL (159 aa). The tract at residues 127-148 is disordered; the sequence is NIHFKSSTNRAPRQWTPGKEGE. The region spanning 160–336 is the OBG-type G domain; the sequence is ADVGLLGLPN…LIWALQDYLD (177 aa). GTP-binding positions include 166-173, 191-195, 213-216, 288-291, and 317-319; these read GLPNAGKS, FTTLH, DIPG, NKLD, and SGL. Residues serine 173 and threonine 193 each coordinate Mg(2+). Residues 339–377 are disordered; sequence KRKDQDAQDQADGTYVFEDPRFDASRGGAAPATPPGGDE.

The protein belongs to the TRAFAC class OBG-HflX-like GTPase superfamily. OBG GTPase family. Monomer. It depends on Mg(2+) as a cofactor.

The protein localises to the cytoplasm. Functionally, an essential GTPase which binds GTP, GDP and possibly (p)ppGpp with moderate affinity, with high nucleotide exchange rates and a fairly low GTP hydrolysis rate. Plays a role in control of the cell cycle, stress response, ribosome biogenesis and in those bacteria that undergo differentiation, in morphogenesis control. This is GTPase Obg from Bordetella bronchiseptica (strain ATCC BAA-588 / NCTC 13252 / RB50) (Alcaligenes bronchisepticus).